The primary structure comprises 594 residues: UvrABC system protein C (594 aa).

Residues 13 to 99 form the GIY-YIG domain; the sequence is NSSGVYQYFD…IKQLKPKYNI (87 aa). In terms of domain architecture, UVR spans 205–240; that stretch reads DRLIKELELKMERLSSNLRFEEALIYRDRIAKIQKI.

The protein belongs to the UvrC family. Interacts with UvrB in an incision complex.

It localises to the cytoplasm. In terms of biological role, the UvrABC repair system catalyzes the recognition and processing of DNA lesions. UvrC both incises the 5' and 3' sides of the lesion. The N-terminal half is responsible for the 3' incision and the C-terminal half is responsible for the 5' incision. This Helicobacter pylori (strain G27) protein is UvrABC system protein C.